Consider the following 977-residue polypeptide: 2-oxoglutarate dehydrogenase E1 component (977 aa).

Residues 77–125 (VLNNRHLAKPAYREEFKGDTERSTAAYIDIREDASTGSTSKLPLEAKFG) enclose the RPE1 insert domain.

This sequence belongs to the alpha-ketoglutarate dehydrogenase family. Homodimer. Part of the 2-oxoglutarate dehydrogenase (OGDH) complex composed of E1 (2-oxoglutarate dehydrogenase), E2 (dihydrolipoamide succinyltransferase) and E3 (dihydrolipoamide dehydrogenase); the complex contains multiple copies of the three enzymatic components (E1, E2 and E3). The cofactor is thiamine diphosphate.

It carries out the reaction N(6)-[(R)-lipoyl]-L-lysyl-[protein] + 2-oxoglutarate + H(+) = N(6)-[(R)-S(8)-succinyldihydrolipoyl]-L-lysyl-[protein] + CO2. In terms of biological role, E1 component of the 2-oxoglutarate dehydrogenase (OGDH) complex which catalyzes the decarboxylation of 2-oxoglutarate, the first step in the conversion of 2-oxoglutarate to succinyl-CoA and CO(2). In Rickettsia felis (strain ATCC VR-1525 / URRWXCal2) (Rickettsia azadi), this protein is 2-oxoglutarate dehydrogenase E1 component (sucA).